The following is a 305-amino-acid chain: UDP-3-O-acyl-N-acetylglucosamine deacetylase (305 aa).

The Zn(2+) site is built by histidine 78, histidine 237, and aspartate 241. Histidine 264 serves as the catalytic Proton donor.

Belongs to the LpxC family. It depends on Zn(2+) as a cofactor.

The catalysed reaction is a UDP-3-O-[(3R)-3-hydroxyacyl]-N-acetyl-alpha-D-glucosamine + H2O = a UDP-3-O-[(3R)-3-hydroxyacyl]-alpha-D-glucosamine + acetate. The protein operates within glycolipid biosynthesis; lipid IV(A) biosynthesis; lipid IV(A) from (3R)-3-hydroxytetradecanoyl-[acyl-carrier-protein] and UDP-N-acetyl-alpha-D-glucosamine: step 2/6. Functionally, catalyzes the hydrolysis of UDP-3-O-myristoyl-N-acetylglucosamine to form UDP-3-O-myristoylglucosamine and acetate, the committed step in lipid A biosynthesis. This Ralstonia pickettii (strain 12J) protein is UDP-3-O-acyl-N-acetylglucosamine deacetylase.